Reading from the N-terminus, the 252-residue chain is Isoprenyl transferase 2 (252 aa).

Aspartate 26 is an active-site residue. Mg(2+) is bound at residue aspartate 26. Residues 27–30 (GNGR), tryptophan 31, arginine 39, histidine 43, and 71–73 (SSE) contribute to the substrate site. Asparagine 74 functions as the Proton acceptor in the catalytic mechanism. Substrate-binding positions include tryptophan 75, arginine 77, arginine 194, and 200-202 (RLS). Glutamate 213 lines the Mg(2+) pocket.

The protein belongs to the UPP synthase family. In terms of assembly, homodimer. Mg(2+) is required as a cofactor.

Catalyzes the condensation of isopentenyl diphosphate (IPP) with allylic pyrophosphates generating different type of terpenoids. The protein is Isoprenyl transferase 2 of Bradyrhizobium diazoefficiens (strain JCM 10833 / BCRC 13528 / IAM 13628 / NBRC 14792 / USDA 110).